The following is a 524-amino-acid chain: B3 domain-containing protein Os07g0183700 (524 aa).

Disordered regions lie at residues aspartate 94–serine 152 and proline 191–glutamine 232. Residues cysteine 100–alanine 109 are compositionally biased toward pro residues. 2 stretches are compositionally biased toward low complexity: residues glycine 110 to alanine 124 and alanine 200 to glutamine 232. The segment at residues serine 336 to arginine 434 is a DNA-binding region (TF-B3).

The protein resides in the nucleus. The sequence is that of B3 domain-containing protein Os07g0183700 from Oryza sativa subsp. japonica (Rice).